We begin with the raw amino-acid sequence, 207 residues long: Small ribosomal subunit protein uS4c (207 aa).

The S4 RNA-binding domain maps to 92-156 (MRLDNILFRL…YQSIITKRIE (65 aa)).

The protein belongs to the universal ribosomal protein uS4 family. Part of the 30S ribosomal subunit. Contacts protein S5. The interaction surface between S4 and S5 is involved in control of translational fidelity.

Its subcellular location is the plastid. It is found in the chloroplast. Its function is as follows. One of the primary rRNA binding proteins, it binds directly to 16S rRNA where it nucleates assembly of the body of the 30S subunit. With S5 and S12 plays an important role in translational accuracy. This Equisetum arvense (Field horsetail) protein is Small ribosomal subunit protein uS4c (rps4).